A 479-amino-acid polypeptide reads, in one-letter code: Outer membrane protein OprJ (479 aa).

Residues 1-19 form the signal peptide; that stretch reads MRKPAFGVSALLIALTLGA. Cys-20 is lipidated: N-palmitoyl cysteine. Residue Cys-20 is the site of S-diacylglycerol cysteine attachment. Residues 102-121 form a disordered region; sequence LNAAATGNRQRQPADLSAGN.

Belongs to the outer membrane factor (OMF) (TC 1.B.17) family.

The protein resides in the cell outer membrane. In terms of biological role, channel-forming component of a multidrug resistance efflux pump. This Pseudomonas aeruginosa (strain ATCC 15692 / DSM 22644 / CIP 104116 / JCM 14847 / LMG 12228 / 1C / PRS 101 / PAO1) protein is Outer membrane protein OprJ (oprJ).